The chain runs to 930 residues: Isoleucine--tRNA ligase (930 aa).

Positions 57-67 match the 'HIGH' region motif; it reads PYANGHIHLGT. Position 559 (Glu559) interacts with L-isoleucyl-5'-AMP. The short motif at 600–604 is the 'KMSKS' region element; it reads KMSKS. Lys603 is an ATP binding site. Zn(2+)-binding residues include Cys899, Cys902, Cys918, and Cys921.

This sequence belongs to the class-I aminoacyl-tRNA synthetase family. IleS type 1 subfamily. In terms of assembly, monomer. Zn(2+) is required as a cofactor.

The protein localises to the cytoplasm. It carries out the reaction tRNA(Ile) + L-isoleucine + ATP = L-isoleucyl-tRNA(Ile) + AMP + diphosphate. In terms of biological role, catalyzes the attachment of isoleucine to tRNA(Ile). As IleRS can inadvertently accommodate and process structurally similar amino acids such as valine, to avoid such errors it has two additional distinct tRNA(Ile)-dependent editing activities. One activity is designated as 'pretransfer' editing and involves the hydrolysis of activated Val-AMP. The other activity is designated 'posttransfer' editing and involves deacylation of mischarged Val-tRNA(Ile). The sequence is that of Isoleucine--tRNA ligase from Desulforudis audaxviator (strain MP104C).